The primary structure comprises 317 residues: Cytochrome c biogenesis protein CcsA (317 aa).

8 consecutive transmembrane segments (helical) span residues 17–37 (VVSI…IVGL), 44–64 (GMIV…IYSG), 71–91 (LYES…LPYL), 101–121 (ITSP…LTQI), 143–163 (MILS…LLVI), 223–243 (IISI…VWAN), 252–272 (WDPK…YLHI), and 284–304 (AIVA…INIL).

The protein belongs to the CcmF/CycK/Ccl1/NrfE/CcsA family. As to quaternary structure, may interact with Ccs1.

The protein resides in the plastid. The protein localises to the chloroplast thylakoid membrane. Its function is as follows. Required during biogenesis of c-type cytochromes (cytochrome c6 and cytochrome f) at the step of heme attachment. This is Cytochrome c biogenesis protein CcsA from Pelargonium hortorum (Common geranium).